A 197-amino-acid polypeptide reads, in one-letter code: TLE family member 5 (197 aa).

The segment at Leu166 to Asp197 is CCN domain. The interval His174–Asp197 is disordered. Basic and acidic residues predominate over residues Leu175 to Asp197. Ser196 bears the Phosphoserine mark.

This sequence belongs to the WD repeat Groucho/TLE family. As to quaternary structure, homooligomer and heterooligomer with other family members. Binds TCF7. Binds the NF-kappa-B subunit RELA. Interacts with PHF12. Interacts (via Q domain) with SIX3. Interacts with SIX6. In terms of processing, ubiquitinated by XIAP/BIRC4. Found predominantly in muscle, heart and Placenta. In fetal tissues, abundantly expressed in the heart, lung, kidney, brain and liver.

The protein resides in the nucleus. Transcriptional corepressor. Acts as a dominant repressor towards other family members. Inhibits NF-kappa-B-regulated gene expression. May be required for the initiation and maintenance of the differentiated state. Essential for the transcriptional repressor activity of SIX3 during retina and lens development. In Homo sapiens (Human), this protein is TLE family member 5.